Consider the following 122-residue polypeptide: ATP synthase epsilon chain (122 aa).

The protein belongs to the ATPase epsilon chain family. F-type ATPases have 2 components, CF(1) - the catalytic core - and CF(0) - the membrane proton channel. CF(1) has five subunits: alpha(3), beta(3), gamma(1), delta(1), epsilon(1). CF(0) has three main subunits: a, b and c.

The protein localises to the cell membrane. In terms of biological role, produces ATP from ADP in the presence of a proton gradient across the membrane. The polypeptide is ATP synthase epsilon chain (Rhodococcus erythropolis (strain PR4 / NBRC 100887)).